Here is a 21-residue protein sequence, read N- to C-terminus: Fibrinogen beta chain (21 aa).

Glutamine 1 is subject to Pyrrolidone carboxylic acid. Positions 1 to 10 (QFPTDYDEGQ) are enriched in acidic residues. A disordered region spans residues 1 to 21 (QFPTDYDEGQDDRPKLGLGAR). O-linked (GalNAc...) threonine glycosylation is present at threonine 4. Tyrosine 6 bears the Sulfotyrosine mark.

Heterohexamer; disulfide linked. Contains 2 sets of 3 non-identical chains (alpha, beta and gamma). The 2 heterotrimers are in head to head conformation with the N-termini in a small central domain. Conversion of fibrinogen to fibrin is triggered by thrombin, which cleaves fibrinopeptides A and B from alpha and beta chains, and thus exposes the N-terminal polymerization sites responsible for the formation of the soft clot.

The protein localises to the secreted. Functionally, cleaved by the protease thrombin to yield monomers which, together with fibrinogen alpha (FGA) and fibrinogen gamma (FGG), polymerize to form an insoluble fibrin matrix. Fibrin has a major function in hemostasis as one of the primary components of blood clots. In addition, functions during the early stages of wound repair to stabilize the lesion and guide cell migration during re-epithelialization. Was originally thought to be essential for platelet aggregation, based on in vitro studies using anticoagulated blood. However subsequent studies have shown that it is not absolutely required for thrombus formation in vivo. Enhances expression of SELP in activated platelets. Maternal fibrinogen is essential for successful pregnancy. Fibrin deposition is also associated with infection, where it protects against IFNG-mediated hemorrhage. May also facilitate the antibacterial immune response via both innate and T-cell mediated pathways. The polypeptide is Fibrinogen beta chain (FGB) (Bubalus bubalis (Domestic water buffalo)).